We begin with the raw amino-acid sequence, 558 residues long: Acid-sensing ion channel 4-B (558 aa).

The Cytoplasmic segment spans residues 1-71 (MPIEFVCKIK…TSERLGFRQT (71 aa)). A helical transmembrane segment spans residues 72–92 (LWGLALLVSLGLFLYQATWSA). At 93 to 433 (ATYLERPHLA…ETIEQKKAYD (341 aa)) the chain is on the extracellular side. 2 disulfides stabilise this stretch: Cys120–Cys204 and Cys182–Cys189. N-linked (GlcNAc...) asparagine glycosylation is found at Asn140, Asn183, Asn188, Asn210, and Asn245. 5 disulfides stabilise this stretch: Cys298-Cys373, Cys317-Cys369, Cys321-Cys367, Cys330-Cys351, and Cys332-Cys344. A glycan (N-linked (GlcNAc...) asparagine) is linked at Asn374. Residues 434-454 (IAGLLGDIGGQMGLFIGASIL) form a helical membrane-spanning segment. The GAS motif; ion selectivity filter motif lies at 450 to 452 (GAS). The Cytoplasmic segment spans residues 455–558 (TILEILDYIY…QQAVQQDFAC (104 aa)).

Belongs to the amiloride-sensitive sodium channel (TC 1.A.6) family. ASIC4 subfamily. In terms of assembly, homotrimer. Heterotrimer; with other ASIC proteins producing functional channels. Expressed in central nervous system.

The protein resides in the cell membrane. It catalyses the reaction Na(+)(in) = Na(+)(out). Does not exhibit measurable stand-alone pH-gated sodium channel activity but may form pH-gated heterotrimeric sodium channels. The sequence is that of Acid-sensing ion channel 4-B from Danio rerio (Zebrafish).